The sequence spans 153 residues: Endoribonuclease YbeY (153 aa).

Residues H116, H120, and H126 each contribute to the Zn(2+) site.

Belongs to the endoribonuclease YbeY family. Zn(2+) is required as a cofactor.

It localises to the cytoplasm. Its function is as follows. Single strand-specific metallo-endoribonuclease involved in late-stage 70S ribosome quality control and in maturation of the 3' terminus of the 16S rRNA. The chain is Endoribonuclease YbeY from Leifsonia xyli subsp. xyli (strain CTCB07).